Reading from the N-terminus, the 146-residue chain is Large ribosomal subunit protein uL14 (146 aa).

This sequence belongs to the universal ribosomal protein uL14 family.

The polypeptide is Large ribosomal subunit protein uL14 (RPL23) (Encephalitozoon cuniculi (strain GB-M1) (Microsporidian parasite)).